The sequence spans 110 residues: NADH-quinone oxidoreductase subunit K (110 aa).

3 consecutive transmembrane segments (helical) span residues 13–33, 38–58, and 70–90; these read VTHG…GIII, ILIL…NFLI, and VFVF…LAIV.

This sequence belongs to the complex I subunit 4L family. NDH-1 is composed of 14 different subunits. Subunits NuoA, H, J, K, L, M, N constitute the membrane sector of the complex.

It localises to the cell inner membrane. It catalyses the reaction a quinone + NADH + 5 H(+)(in) = a quinol + NAD(+) + 4 H(+)(out). NDH-1 shuttles electrons from NADH, via FMN and iron-sulfur (Fe-S) centers, to quinones in the respiratory chain. The immediate electron acceptor for the enzyme in this species is believed to be ubiquinone. Couples the redox reaction to proton translocation (for every two electrons transferred, four hydrogen ions are translocated across the cytoplasmic membrane), and thus conserves the redox energy in a proton gradient. The protein is NADH-quinone oxidoreductase subunit K of Francisella tularensis subsp. tularensis (strain FSC 198).